The following is a 173-amino-acid chain: Bifunctional protein PyrR (173 aa).

Positions 93–105 (VILVDDVLYTGRT) match the PRPP-binding motif.

This sequence belongs to the purine/pyrimidine phosphoribosyltransferase family. PyrR subfamily. In terms of assembly, homodimer and homohexamer; in equilibrium.

It catalyses the reaction UMP + diphosphate = 5-phospho-alpha-D-ribose 1-diphosphate + uracil. Functionally, regulates transcriptional attenuation of the pyrimidine nucleotide (pyr) operon by binding in a uridine-dependent manner to specific sites on pyr mRNA. This disrupts an antiterminator hairpin in the RNA and favors formation of a downstream transcription terminator, leading to a reduced expression of downstream genes. Its function is as follows. Also displays a weak uracil phosphoribosyltransferase activity which is not physiologically significant. This is Bifunctional protein PyrR from Streptococcus suis (strain 05ZYH33).